Consider the following 185-residue polypeptide: Ribosome-recycling factor (185 aa).

This sequence belongs to the RRF family.

The protein localises to the cytoplasm. Responsible for the release of ribosomes from messenger RNA at the termination of protein biosynthesis. May increase the efficiency of translation by recycling ribosomes from one round of translation to another. This is Ribosome-recycling factor from Bacillus mycoides (strain KBAB4) (Bacillus weihenstephanensis).